We begin with the raw amino-acid sequence, 712 residues long: Polyribonucleotide nucleotidyltransferase (712 aa).

Positions 487 and 493 each coordinate Mg(2+). In terms of domain architecture, KH spans 554–613 (PKIITMTINPDKIRDVIGPSGKQINKIIEETGVKIDIEQDGTVFISSINQEMNDKAKKII). An S1 motif domain is found at 623-691 (GEIYEGKVKR…KQGRVNLSRK (69 aa)).

This sequence belongs to the polyribonucleotide nucleotidyltransferase family. Requires Mg(2+) as cofactor.

The protein localises to the cytoplasm. It carries out the reaction RNA(n+1) + phosphate = RNA(n) + a ribonucleoside 5'-diphosphate. Its function is as follows. Involved in mRNA degradation. Catalyzes the phosphorolysis of single-stranded polyribonucleotides processively in the 3'- to 5'-direction. This Bacillus cereus (strain AH187) protein is Polyribonucleotide nucleotidyltransferase.